We begin with the raw amino-acid sequence, 446 residues long: NADH-dependent phenylglyoxylate dehydrogenase subunit beta (446 aa).

4Fe-4S ferredoxin-type domains are found at residues 6–35 (STIAFDPAKCDGCGDCMTACAQAKTGTDDI), 49–80 (ADKTFELALCRQCADPKCVTVCPAGALNKDGT), 82–111 (GVIGWDATKCVDCLLCTVGCAYAGIALDEA), and 109–141 (DEATGHVAKCDTCDGNPACVPACPHGALKHITT).

In terms of assembly, dimer of heteropentamers composed of an alpha (PadG), a beta (PadI), a gamma (PadE), a delta (PadF) and an epsilon (PadH) subunit. It depends on [4Fe-4S] cluster as a cofactor.

The enzyme catalyses phenylglyoxylate + NAD(+) + CoA = benzoyl-CoA + CO2 + NADH. Activated by magnesium ions and thiamine diphosphate. Its function is as follows. Involved in the anaerobic metabolism of phenylalanine and phenylacetate. Catalyzes the oxidative decarboxylation of phenylglyoxylate to benzoyl-CoA and CO(2). It can also react slowly with 2-oxo-3-methylbutanoate and use different electron acceptors such as benzyl viologen, methyl viologen, FAD or FMN, but NAD seems to be the physiological electron acceptor. Also catalyzes an isotope exchange between CO(2) and the carboxyl group which proves partial or complete reversibility of the oxidative decarboxylation reaction. The sequence is that of NADH-dependent phenylglyoxylate dehydrogenase subunit beta (padI) from Aromatoleum evansii (Azoarcus evansii).